The following is a 633-amino-acid chain: Probable potassium transport system protein Kup 2 (633 aa).

11 helical membrane passes run 59–79 (ISAILWALMVVVSLKYVILIM), 110–130 (ILLVGLFGAALFYGDAVLTPA), 145–165 (TALQPYVLPASVGVLIALFLF), 173–193 (IGALFGPVTIVWFLALAAAGI), 219–239 (GFASFAVLGAVLLAFTGAEAL), 256–276 (FGLVFPALALNYLGQGALIIV), 287–307 (LLYPSWALYPMVALATAATVI), 345–365 (IYIPTLNGMLLVAVLVAVLGF), 374–394 (AYGVAVTGTMLVTTLLTFFVI), 402–422 (LLLSLVATGFFIAVDMAFVSS), and 429–449 (EGGWFPLVVGAGIFVVMLTWV).

It belongs to the HAK/KUP transporter (TC 2.A.72) family.

The protein localises to the cell inner membrane. The enzyme catalyses K(+)(in) + H(+)(in) = K(+)(out) + H(+)(out). Functionally, transport of potassium into the cell. Likely operates as a K(+):H(+) symporter. The sequence is that of Probable potassium transport system protein Kup 2 from Cupriavidus necator (strain ATCC 17699 / DSM 428 / KCTC 22496 / NCIMB 10442 / H16 / Stanier 337) (Ralstonia eutropha).